The following is a 154-amino-acid chain: Myoglobin (154 aa).

The region spanning 2 to 148 is the Globin domain; that stretch reads GLSDGEWQLV…FRNDMAAQYK (147 aa). Ser4 is modified (phosphoserine). His65 is a nitrite binding site. His65 contributes to the O2 binding site. Thr68 bears the Phosphothreonine mark. Heme b is bound at residue His94.

The protein belongs to the globin family. Monomeric.

Its subcellular location is the cytoplasm. The protein resides in the sarcoplasm. It catalyses the reaction Fe(III)-heme b-[protein] + nitric oxide + H2O = Fe(II)-heme b-[protein] + nitrite + 2 H(+). It carries out the reaction H2O2 + AH2 = A + 2 H2O. In terms of biological role, monomeric heme protein which primary function is to store oxygen and facilitate its diffusion within muscle tissues. Reversibly binds oxygen through a pentacoordinated heme iron and enables its timely and efficient release as needed during periods of heightened demand. Depending on the oxidative conditions of tissues and cells, and in addition to its ability to bind oxygen, it also has a nitrite reductase activity whereby it regulates the production of bioactive nitric oxide. Under stress conditions, like hypoxia and anoxia, it also protects cells against reactive oxygen species thanks to its pseudoperoxidase activity. The chain is Myoglobin (MB) from Bos mutus grunniens (Wild yak).